We begin with the raw amino-acid sequence, 309 residues long: Olfactory receptor 5AC2 (309 aa).

The Extracellular segment spans residues 1–27 (MDISEGNKTLVTEFVLTGLTDRPWLHV). Asparagine 7 carries N-linked (GlcNAc...) asparagine glycosylation. Residues 28 to 48 (LFFVVFLVVYLITMVGNLGLI) form a helical membrane-spanning segment. At 49–56 (VLIWNDPH) the chain is on the cytoplasmic side. Residues 57 to 77 (LHMPMYLFLGGLAFSDACTST) traverse the membrane as a helical segment. Residues 78-101 (SITPRMLVNFLDKTAMISLAECIT) lie on the Extracellular side of the membrane. Cysteine 99 and cysteine 191 are disulfide-bonded. Residues 102-122 (QFYFFASSATTECFLLVMMAY) form a helical membrane-spanning segment. Residues 123–135 (DRYVAICNPLLYP) are Cytoplasmic-facing. The helical transmembrane segment at 136-156 (VMMSNKLSAQLLSISYVIGFL) threads the bilayer. Over 157-198 (HPLVHVSLLLRLTFCRFNIIHYFYCEILQLFKISCNGPSINA) the chain is Extracellular. Residues 199 to 219 (LMIFIFGAFIQIPTLMTIIIS) traverse the membrane as a helical segment. Topologically, residues 220-239 (YTRVLFDILKKKSEKGRSKA) are cytoplasmic. A helical membrane pass occupies residues 240–260 (FSTCGAHLLSVSLYYGTLIFM). The Extracellular portion of the chain corresponds to 261 to 273 (YVRPASGLAEDQD). A helical transmembrane segment spans residues 274-294 (KVYSLFYTIIIPLLNPFIYSL). The Cytoplasmic segment spans residues 295–309 (RNKKVMHALRRVIRK).

It belongs to the G-protein coupled receptor 1 family.

The protein localises to the cell membrane. In terms of biological role, odorant receptor. The polypeptide is Olfactory receptor 5AC2 (OR5AC2) (Homo sapiens (Human)).